The primary structure comprises 522 residues: Nif-specific regulatory protein (522 aa).

The segment at 1-184 is a domain; that stretch reads MNATIPQRSA…AQTVRLVVNI (184 aa). The GAF domain maps to 37 to 178; that stretch reads QIDELLEQVL…IVANLLAQTV (142 aa). In terms of domain architecture, Sigma-54 factor interaction spans 211–439; the sequence is VVGHTPTMRR…LENCLERSAI (229 aa). Residues 239–246 and 302–311 contribute to the ATP site; these read GESGTGKE and ADGGTLFLDE. The inter-domain linker stretch occupies residues 440–479; that stretch reads MSEDGTITRDVVSLTGVDNESPPLAAPLPEVNLADETLDD. Residues 480–522 are C-terminal DNA-binding domain; it reads RERVIAALEQAGWVQAKAARLLGMTPRQIAYRIQTLNIHMRKI. The segment at residues 494-513 is a DNA-binding region (H-T-H motif); that stretch reads QAKAARLLGMTPRQIAYRIQ.

In terms of assembly, interacts with sigma-54.

Its function is as follows. Required for activation of most nif operons, which are directly involved in nitrogen fixation. In Azotobacter vinelandii, this protein is Nif-specific regulatory protein (nifA).